The following is a 282-amino-acid chain: Bifunctional protein FolD (282 aa).

Residues 165 to 167 (GAS) and I231 each bind NADP(+).

It belongs to the tetrahydrofolate dehydrogenase/cyclohydrolase family. In terms of assembly, homodimer.

The catalysed reaction is (6R)-5,10-methylene-5,6,7,8-tetrahydrofolate + NADP(+) = (6R)-5,10-methenyltetrahydrofolate + NADPH. It carries out the reaction (6R)-5,10-methenyltetrahydrofolate + H2O = (6R)-10-formyltetrahydrofolate + H(+). It participates in one-carbon metabolism; tetrahydrofolate interconversion. Its function is as follows. Catalyzes the oxidation of 5,10-methylenetetrahydrofolate to 5,10-methenyltetrahydrofolate and then the hydrolysis of 5,10-methenyltetrahydrofolate to 10-formyltetrahydrofolate. This Francisella tularensis subsp. holarctica (strain FTNF002-00 / FTA) protein is Bifunctional protein FolD.